The chain runs to 352 residues: MLETLRERLLSVQQDFTSGLKTLSDKSREAKVKGKPRTAPRLPKYSAGLELLSRYEDAWAALHRRAKECADAGELVDSEVVMLSAHWEKKRTSLNELQGQLQQLPALLQDLESLMASLAHLETSFEEVENHLLHLEDLCGQCELERHKQAQAQHLESYKKSKRKELEAFKAELDTEHTQKALEMEHTQQLKLKERQKFFEEAFQQDMEQYLSTGYLQIAERREPMGSMSSMEVNVDVLEQMDLMDISDQEALDVFLNSGGEDNIVMSPGVEMESNPNQNEMSLQIPSPSESASQPPASPSACTDLDTADAPLIQSDEEEVQVDTALVTLHTDRKSTPGVSDDSDQCDSTQDI.

Phosphoserine is present on S11. The stretch at 88 to 176 (EKKRTSLNEL…EAFKAELDTE (89 aa)) forms a coiled coil. The segment at 173–325 (LDTEHTQKAL…DEEEVQVDTA (153 aa)) is dysbindin. The Nuclear export signal motif lies at 243 to 256 (LMDISDQEALDVFL). Residues 267 to 352 (SPGVEMESNP…SDQCDSTQDI (86 aa)) form a disordered region. A compositionally biased stretch (polar residues) spans 274–285 (SNPNQNEMSLQI). Low complexity predominate over residues 286 to 301 (PSPSESASQPPASPSA). Residues S315, S340, and S343 each carry the phosphoserine modification.

Belongs to the dysbindin family. Interacts with AP3M1 and TRIM32. Interacts (isoform 1 and isoform 2 only) with the DNA-dependent protein kinase complex DNA-PK; the interaction phosphorylates DTNBP1 in vitro. Interacts directly in this complex with XRCC5 and XRCC6. Interacts with XPO1; the interaction exports DTNBP1 out of the nucleus. Component of the biogenesis of lysosome-related organelles complex 1 (BLOC-1) composed of BLOC1S1, BLOC1S2, BLOC1S3, BLOC1S4, BLOC1S5, BLOC1S6, DTNBP1/BLOC1S7 and SNAPIN/BLOC1S8. The BLOC-1 complex associates with the AP-3 protein complex and membrane protein cargos. This BLOC-1 complex also associates with the BLOC-2 complex in endosomes. Binds to DTNA and DTNB but may not be a physiological binding partner. Interacts (via its coiled coil domain) with KXD1. Interacts with AP3B2, BLOC1S5, BLOC1S6, CMYA5, PI4K2, RNF151 and SNAPIN/BLOC1S8. Interacts with XPO1; the interaction exports DTNBP1 out of the nucleus. Ubiquitinated by TRIM32. Ubiquitination leads to DTNBP1 degradation. Detected in brain, in hippocampus and dentate gyrus neurons. Detected at axon bundles and axon terminals, notably in the cerebellum and hippocampus. Detected in neuropil in hippocampus, lateral septum, basal ganglia and substantia nigra. Highly expressed in pyramidal cells of hippocampus CA2 and CA3. Detected at the heart and skeletal muscle sarcolemma (at protein level). Ubiquitously expressed. The highest expression is observed in testis, liver, kidney, brain, heart and lung. Expressed at lower levels in stomach and small intestine.

It localises to the cytoplasm. Its subcellular location is the cytoplasmic vesicle membrane. The protein resides in the endosome membrane. The protein localises to the melanosome membrane. It is found in the postsynaptic density. It localises to the endoplasmic reticulum. Its subcellular location is the nucleus. The protein resides in the cytoplasmic vesicle. The protein localises to the secretory vesicle. It is found in the synaptic vesicle membrane. It localises to the postsynaptic cell membrane. Its function is as follows. Component of the BLOC-1 complex, a complex that is required for normal biogenesis of lysosome-related organelles (LRO), such as platelet dense granules and melanosomes. In concert with the AP-3 complex, the BLOC-1 complex is required to target membrane protein cargos into vesicles assembled at cell bodies for delivery into neurites and nerve terminals. The BLOC-1 complex, in association with SNARE proteins, is also proposed to be involved in neurite extension. Associates with the BLOC-2 complex to facilitate the transport of TYRP1 independent of AP-3 function. Plays a role in synaptic vesicle trafficking and in neurotransmitter release. Plays a role in the regulation of cell surface exposure of DRD2. May play a role in actin cytoskeleton reorganization and neurite outgrowth. May modulate MAPK8 phosphorylation. Appears to promote neuronal transmission and viability through regulating the expression of SNAP25 and SYN1, modulating PI3-kinase-Akt signaling and influencing glutamatergic release. Regulates the expression of SYN1 through binding to its promoter. Modulates prefrontal cortical activity via the dopamine/D2 pathway. The sequence is that of Dysbindin (Dtnbp1) from Mus musculus (Mouse).